The following is a 460-amino-acid chain: Argininosuccinate lyase (460 aa).

It belongs to the lyase 1 family. Argininosuccinate lyase subfamily.

It is found in the cytoplasm. It carries out the reaction 2-(N(omega)-L-arginino)succinate = fumarate + L-arginine. The protein operates within amino-acid biosynthesis; L-arginine biosynthesis; L-arginine from L-ornithine and carbamoyl phosphate: step 3/3. The polypeptide is Argininosuccinate lyase (Campylobacter jejuni subsp. doylei (strain ATCC BAA-1458 / RM4099 / 269.97)).